The sequence spans 211 residues: NADH-quinone oxidoreductase subunit I 1 (211 aa).

2 4Fe-4S ferredoxin-type domains span residues 50-80 (LNRHPDGLEKCVGCELCAWACPADAIYVEGA) and 96-125 (RVYQINYARCILCGLCIEACPTRALTMTNE). Residues Cys60, Cys63, Cys66, Cys70, Cys105, Cys108, Cys111, and Cys115 each coordinate [4Fe-4S] cluster. The tract at residues 192–211 (QEGDSTFGATEPASEEVIRR) is disordered.

The protein belongs to the complex I 23 kDa subunit family. NDH-1 is composed of 14 different subunits. Subunits NuoA, H, J, K, L, M, N constitute the membrane sector of the complex. [4Fe-4S] cluster is required as a cofactor.

The protein localises to the cell membrane. The enzyme catalyses a quinone + NADH + 5 H(+)(in) = a quinol + NAD(+) + 4 H(+)(out). NDH-1 shuttles electrons from NADH, via FMN and iron-sulfur (Fe-S) centers, to quinones in the respiratory chain. The immediate electron acceptor for the enzyme in this species is believed to be ubiquinone. Couples the redox reaction to proton translocation (for every two electrons transferred, four hydrogen ions are translocated across the cytoplasmic membrane), and thus conserves the redox energy in a proton gradient. The chain is NADH-quinone oxidoreductase subunit I 1 from Streptomyces coelicolor (strain ATCC BAA-471 / A3(2) / M145).